Reading from the N-terminus, the 190-residue chain is Imidazoleglycerol-phosphate dehydratase (190 aa).

This sequence belongs to the imidazoleglycerol-phosphate dehydratase family.

Its subcellular location is the cytoplasm. It catalyses the reaction D-erythro-1-(imidazol-4-yl)glycerol 3-phosphate = 3-(imidazol-4-yl)-2-oxopropyl phosphate + H2O. It functions in the pathway amino-acid biosynthesis; L-histidine biosynthesis; L-histidine from 5-phospho-alpha-D-ribose 1-diphosphate: step 6/9. This is Imidazoleglycerol-phosphate dehydratase from Aliarcobacter butzleri (strain RM4018) (Arcobacter butzleri).